A 115-amino-acid chain; its full sequence is NADH-ubiquinone oxidoreductase chain 3 (115 aa).

Helical transmembrane passes span 5–25, 55–75, and 86–106; these read LTLM…FWLP, FFLV…LLPL, and LMLT…AYEW.

This sequence belongs to the complex I subunit 3 family. As to quaternary structure, core subunit of respiratory chain NADH dehydrogenase (Complex I) which is composed of 45 different subunits. Interacts with TMEM186. Interacts with TMEM242.

Its subcellular location is the mitochondrion inner membrane. It catalyses the reaction a ubiquinone + NADH + 5 H(+)(in) = a ubiquinol + NAD(+) + 4 H(+)(out). Its function is as follows. Core subunit of the mitochondrial membrane respiratory chain NADH dehydrogenase (Complex I) which catalyzes electron transfer from NADH through the respiratory chain, using ubiquinone as an electron acceptor. Essential for the catalytic activity of complex I. This is NADH-ubiquinone oxidoreductase chain 3 from Avahi cleesei (Cleese's woolly lemur).